Here is a 513-residue protein sequence, read N- to C-terminus: Gluconokinase (513 aa).

ATP-binding positions include Lys16, Thr261, Gly300, and 412-416 (GFARS).

Belongs to the FGGY kinase family.

The enzyme catalyses D-gluconate + ATP = 6-phospho-D-gluconate + ADP + H(+). The protein operates within carbohydrate acid metabolism; D-gluconate degradation. With respect to regulation, catabolite repression by gluconate. In Bacillus licheniformis, this protein is Gluconokinase (gntK).